The following is a 309-amino-acid chain: Protein EXORDIUM-like 1 (309 aa).

Residues methionine 1–threonine 23 form the signal peptide.

This sequence belongs to the EXORDIUM family.

The protein localises to the secreted. It localises to the extracellular space. It is found in the apoplast. In terms of biological role, may play a role in a brassinosteroid-dependent regulatory pathway that controls growth and development under low carbon and energy availability. In Arabidopsis thaliana (Mouse-ear cress), this protein is Protein EXORDIUM-like 1 (EXL1).